The sequence spans 240 residues: UDP-2,3-diacylglucosamine hydrolase (240 aa).

Mn(2+) is bound by residues Asp-9, His-11, Asp-43, Asn-81, and His-116. 81–82 (NR) contributes to the substrate binding site. The substrate site is built by Asp-124, Ser-162, Lys-166, Lys-169, and His-197. Residues His-197 and His-199 each contribute to the Mn(2+) site.

It belongs to the LpxH family. Requires Mn(2+) as cofactor.

Its subcellular location is the cell inner membrane. It carries out the reaction UDP-2-N,3-O-bis[(3R)-3-hydroxytetradecanoyl]-alpha-D-glucosamine + H2O = 2-N,3-O-bis[(3R)-3-hydroxytetradecanoyl]-alpha-D-glucosaminyl 1-phosphate + UMP + 2 H(+). The protein operates within glycolipid biosynthesis; lipid IV(A) biosynthesis; lipid IV(A) from (3R)-3-hydroxytetradecanoyl-[acyl-carrier-protein] and UDP-N-acetyl-alpha-D-glucosamine: step 4/6. Functionally, hydrolyzes the pyrophosphate bond of UDP-2,3-diacylglucosamine to yield 2,3-diacylglucosamine 1-phosphate (lipid X) and UMP by catalyzing the attack of water at the alpha-P atom. Involved in the biosynthesis of lipid A, a phosphorylated glycolipid that anchors the lipopolysaccharide to the outer membrane of the cell. This Neisseria meningitidis serogroup C / serotype 2a (strain ATCC 700532 / DSM 15464 / FAM18) protein is UDP-2,3-diacylglucosamine hydrolase.